The sequence spans 1358 residues: DNA-directed RNA polymerase subunit beta (1358 aa).

The protein belongs to the RNA polymerase beta chain family. In terms of assembly, the RNAP catalytic core consists of 2 alpha, 1 beta, 1 beta' and 1 omega subunit. When a sigma factor is associated with the core the holoenzyme is formed, which can initiate transcription.

It carries out the reaction RNA(n) + a ribonucleoside 5'-triphosphate = RNA(n+1) + diphosphate. In terms of biological role, DNA-dependent RNA polymerase catalyzes the transcription of DNA into RNA using the four ribonucleoside triphosphates as substrates. The chain is DNA-directed RNA polymerase subunit beta from Francisella tularensis subsp. holarctica (strain LVS).